The primary structure comprises 227 residues: Protein Saci_0792 (227 aa).

Residues 15-209 (DIGKQLIKIA…EINKNTDEII (195 aa)) form the AMMECR1 domain.

The protein is Protein Saci_0792 of Sulfolobus acidocaldarius (strain ATCC 33909 / DSM 639 / JCM 8929 / NBRC 15157 / NCIMB 11770).